The following is a 271-amino-acid chain: Insulin-like growth factor-binding protein 5 (271 aa).

The N-terminal stretch at 1-19 (MVISVVLLLLAAYAVPAQG) is a signal peptide. Positions 22 to 102 (SFVHCEPCDE…LHGRGVCLNE (81 aa)) constitute an IGFBP N-terminal domain. Intrachain disulfides connect C26-C52, C29-C54, C37-C55, C44-C58, C66-C79, and C73-C99. Positions 109-121 (TKIERDSREHEEP) are enriched in basic and acidic residues. The tract at residues 109 to 129 (TKIERDSREHEEPTTSEMAEE) is disordered. At S115 the chain carries Phosphoserine. The Thyroglobulin type-1 domain maps to 188-262 (QGPCRRHMEA…MEYVDGDFQC (75 aa)). 3 disulfide bridges follow: C191–C218, C229–C240, and C242–C262.

As to quaternary structure, interacts with IGF1; this interaction enhances the growth stimulatory effects of IGF1 on fibroblasts. Interacts with CAV1; this interaction allows trafficking of IGFBP5 from the plasma membrane to the nucleus. Interacts with NCL; this interaction is necessary for IGFBP5 localization to the nucleus. As to expression, most abundant in kidney, uterus and gastrocnemius muscle.

Its subcellular location is the secreted. The protein localises to the cytoplasm. It localises to the nucleus. Multifunctional protein that plays a critical role in regulating the availability of IGFs to their receptors and thereby regulates IGF-mediated cellular processes including proliferation, differentiation, and apoptosis in a cell-type specific manner. Increases the cell proliferation of osteoblasts, intestinal smooth muscle cells and neuroblastoma cells. Enhances adhesion and survival of epithelial cells but decreases adhesion of mesenchymal cells. Once secreted, acts as a major mediator of mTORC1-dependent feedback inhibition of IGF1 signaling. Also plays a role in the induction of extracellular matrix (ECM) production and deposition independently of its nuclear translocation and binding to IGFs. Acts itself as a growth factor that can act independently of IGFs to regulate bone formation. Acts as a ligand for the ROR1 receptor which triggers formation of ROR1/HER2 heterodimer to enhance CREB oncogenic signaling. In Mus musculus (Mouse), this protein is Insulin-like growth factor-binding protein 5 (Igfbp5).